Consider the following 276-residue polypeptide: Large ribosomal subunit protein uL2 (276 aa).

Disordered regions lie at residues 35-55 (APLH…RHQG) and 222-276 (GSVM…RRKK). The segment covering 258-276 (KTRKKNKHSDKYIVRRRKK) has biased composition (basic residues).

The protein belongs to the universal ribosomal protein uL2 family. Part of the 50S ribosomal subunit. Forms a bridge to the 30S subunit in the 70S ribosome.

In terms of biological role, one of the primary rRNA binding proteins. Required for association of the 30S and 50S subunits to form the 70S ribosome, for tRNA binding and peptide bond formation. It has been suggested to have peptidyltransferase activity; this is somewhat controversial. Makes several contacts with the 16S rRNA in the 70S ribosome. This Shouchella clausii (strain KSM-K16) (Alkalihalobacillus clausii) protein is Large ribosomal subunit protein uL2.